We begin with the raw amino-acid sequence, 101 residues long: Secreted RxLR effector protein 64 (101 aa).

Positions 1 to 23 (MMSPPMTTTLMFILNYAIISFHG) are cleaved as a signal peptide. The RxLR motif lies at 48–51 (RELR). A helical membrane pass occupies residues 67 to 87 (LQPILPLPLCLPFPLVPASIF).

It belongs to the RxLR effector family.

Its subcellular location is the secreted. It localises to the host cytoplasm. It is found in the host nucleus. The protein resides in the membrane. Effector that acts as a broad suppressor of cell death to interrupt plant immunity. Inhibits cell death induced by cell death-inducing proteins, including the PAMP elicitor INF1 from P.infestans. The protein is Secreted RxLR effector protein 64 of Plasmopara viticola (Downy mildew of grapevine).